Reading from the N-terminus, the 245-residue chain is Biosynthetic peptidoglycan transglycosylase (245 aa).

A helical transmembrane segment spans residues 20 to 42 (VYAGSVFAGAWLATQLFYLAQIA).

It belongs to the glycosyltransferase 51 family.

The protein localises to the cell inner membrane. The enzyme catalyses [GlcNAc-(1-&gt;4)-Mur2Ac(oyl-L-Ala-gamma-D-Glu-L-Lys-D-Ala-D-Ala)](n)-di-trans,octa-cis-undecaprenyl diphosphate + beta-D-GlcNAc-(1-&gt;4)-Mur2Ac(oyl-L-Ala-gamma-D-Glu-L-Lys-D-Ala-D-Ala)-di-trans,octa-cis-undecaprenyl diphosphate = [GlcNAc-(1-&gt;4)-Mur2Ac(oyl-L-Ala-gamma-D-Glu-L-Lys-D-Ala-D-Ala)](n+1)-di-trans,octa-cis-undecaprenyl diphosphate + di-trans,octa-cis-undecaprenyl diphosphate + H(+). Its pathway is cell wall biogenesis; peptidoglycan biosynthesis. In terms of biological role, peptidoglycan polymerase that catalyzes glycan chain elongation from lipid-linked precursors. This is Biosynthetic peptidoglycan transglycosylase from Burkholderia orbicola (strain MC0-3).